Consider the following 244-residue polypeptide: UPF0280 protein Msp_1322 (244 aa).

It belongs to the UPF0280 family.

This Methanosphaera stadtmanae (strain ATCC 43021 / DSM 3091 / JCM 11832 / MCB-3) protein is UPF0280 protein Msp_1322.